The sequence spans 160 residues: MKLQVLPLSQEAFSAYGDVIETQQRDFFHINNGLVERYHDLALVEILEQDRTLISINRAQPANLPLTIYELERHPLGTQAFIPMKGEVFVVVVALGDDKPDLSTLRAFITNGEQGVNYHRNVWHHPLFAWQRVTDFLTIDRGGSDNCDVESIPEQELCFA.

It belongs to the ureidoglycolate lyase family. As to quaternary structure, homodimer. Ni(2+) is required as a cofactor.

It catalyses the reaction (S)-ureidoglycolate = urea + glyoxylate. It functions in the pathway nitrogen metabolism; (S)-allantoin degradation. Its function is as follows. Catalyzes the catabolism of the allantoin degradation intermediate (S)-ureidoglycolate, generating urea and glyoxylate. Involved in the anaerobic utilization of allantoin as sole nitrogen source. Reinforces the induction of genes involved in the degradation of allantoin and glyoxylate by producing glyoxylate. This is Ureidoglycolate lyase from Escherichia coli O139:H28 (strain E24377A / ETEC).